A 117-amino-acid chain; its full sequence is Immunoglobulin lambda variable 6-57 (117 aa).

A signal peptide spans 1-19 (MAWAPLLLTLLAHCTGSWA). Positions 20 to 44 (NFMLTQPHSVSESPGKTVTISCTGS) are framework-1. The region spanning 20-117 (NFMLTQPHSV…YYCQSYDSSN (98 aa)) is the Ig-like domain. Cys-41 and Cys-110 are disulfide-bonded. The complementarity-determining-1 stretch occupies residues 45–52 (SGSIASNY). Residues 53 to 69 (VQWYQQRPGSAPTTVIY) form a framework-2 region. Residues 65-97 (TTVIYEDNQRPSGVPDRFSGSIDSSSNSASLTI) are disordered. Residues 70 to 72 (EDN) form a complementarity-determining-2 region. Residues 73–110 (QRPSGVPDRFSGSIDSSSNSASLTISGLKTEDEADYYC) are framework-3. The segment covering 83–97 (SGSIDSSSNSASLTI) has biased composition (low complexity). The tract at residues 111 to 117 (QSYDSSN) is complementarity-determining-3.

As to quaternary structure, immunoglobulins are composed of two identical heavy chains and two identical light chains; disulfide-linked.

Its subcellular location is the secreted. It localises to the cell membrane. Functionally, v region of the variable domain of immunoglobulin light chains that participates in the antigen recognition. Immunoglobulins, also known as antibodies, are membrane-bound or secreted glycoproteins produced by B lymphocytes. In the recognition phase of humoral immunity, the membrane-bound immunoglobulins serve as receptors which, upon binding of a specific antigen, trigger the clonal expansion and differentiation of B lymphocytes into immunoglobulins-secreting plasma cells. Secreted immunoglobulins mediate the effector phase of humoral immunity, which results in the elimination of bound antigens. The antigen binding site is formed by the variable domain of one heavy chain, together with that of its associated light chain. Thus, each immunoglobulin has two antigen binding sites with remarkable affinity for a particular antigen. The variable domains are assembled by a process called V-(D)-J rearrangement and can then be subjected to somatic hypermutations which, after exposure to antigen and selection, allow affinity maturation for a particular antigen. This chain is Immunoglobulin lambda variable 6-57, found in Homo sapiens (Human).